The following is a 555-amino-acid chain: Glutamine--tRNA ligase (555 aa).

The short motif at 34–44 (PEPNGYLHIGH) is the 'HIGH' region element. ATP is bound by residues 35–37 (EPN) and 41–47 (HIGHAKS). L-glutamine contacts are provided by aspartate 67 and tyrosine 212. Residues threonine 231, 261 to 262 (RL), and 269 to 271 (MSK) contribute to the ATP site. The 'KMSKS' region motif lies at 268–272 (VMSKR). Positions 317 to 324 (TKQDNTIE) are interaction with tRNA.

This sequence belongs to the class-I aminoacyl-tRNA synthetase family. As to quaternary structure, monomer.

It localises to the cytoplasm. It carries out the reaction tRNA(Gln) + L-glutamine + ATP = L-glutaminyl-tRNA(Gln) + AMP + diphosphate. This is Glutamine--tRNA ligase from Salmonella newport (strain SL254).